Reading from the N-terminus, the 88-residue chain is LYR motif-containing protein 2 (88 aa).

Residues 1–19 (MATSRLPPATLTLKQFMRR) constitute a mitochondrion transit peptide.

Belongs to the complex I LYR family.

It localises to the mitochondrion. In terms of biological role, involved in efficient integration of the N-module into mitochondrial respiratory chain complex I. The chain is LYR motif-containing protein 2 (LYRM2) from Bos taurus (Bovine).